Consider the following 775-residue polypeptide: Subtilisin-like protease SBT4.1 (775 aa).

The first 23 residues, Met1–Ala23, serve as a signal peptide directing secretion. An N-linked (GlcNAc...) asparagine glycan is attached at Asn24. A propeptide spans Asn24 to Gln106 (activation peptide). Positions Thr29–Leu105 constitute an Inhibitor I9 domain. Residues Ser110 to Arg606 form the Peptidase S8 domain. 2 N-linked (GlcNAc...) asparagine glycosylation sites follow: Asn115 and Asn126. Asp136 (charge relay system) is an active-site residue. Asn162 carries an N-linked (GlcNAc...) asparagine glycan. The active-site Charge relay system is His196. One can recognise a PA domain in the interval Phe365–Leu459. A glycan (N-linked (GlcNAc...) asparagine) is linked at Asn437. Ser551 functions as the Charge relay system in the catalytic mechanism. Asn601 is a glycosylation site (N-linked (GlcNAc...) asparagine).

The protein belongs to the peptidase S8 family. Post-translationally, the C-terminal propeptide is autocleaved.

The protein resides in the secreted. In Arabidopsis thaliana (Mouse-ear cress), this protein is Subtilisin-like protease SBT4.1.